The primary structure comprises 512 residues: 2,3-bisphosphoglycerate-independent phosphoglycerate mutase (512 aa).

Mn(2+)-binding residues include D14 and S64. The Phosphoserine intermediate role is filled by S64. Substrate-binding positions include H125, 155 to 156 (RD), R187, R193, 259 to 262 (RADR), and K332. Mn(2+) is bound by residues D399, H403, D440, H441, and H459.

This sequence belongs to the BPG-independent phosphoglycerate mutase family. Monomer. It depends on Mn(2+) as a cofactor.

The enzyme catalyses (2R)-2-phosphoglycerate = (2R)-3-phosphoglycerate. It functions in the pathway carbohydrate degradation; glycolysis; pyruvate from D-glyceraldehyde 3-phosphate: step 3/5. In terms of biological role, catalyzes the interconversion of 2-phosphoglycerate and 3-phosphoglycerate. The chain is 2,3-bisphosphoglycerate-independent phosphoglycerate mutase from Ruthia magnifica subsp. Calyptogena magnifica.